The sequence spans 212 residues: Uracil phosphoribosyltransferase (212 aa).

5-phospho-alpha-D-ribose 1-diphosphate is bound by residues Arg78, Arg103, and 130–138 (DPMLATGGS). Uracil is bound by residues Ile193 and 198–200 (GDA). Asp199 contributes to the 5-phospho-alpha-D-ribose 1-diphosphate binding site.

This sequence belongs to the UPRTase family. Requires Mg(2+) as cofactor.

It carries out the reaction UMP + diphosphate = 5-phospho-alpha-D-ribose 1-diphosphate + uracil. It functions in the pathway pyrimidine metabolism; UMP biosynthesis via salvage pathway; UMP from uracil: step 1/1. Allosterically activated by GTP. Its function is as follows. Catalyzes the conversion of uracil and 5-phospho-alpha-D-ribose 1-diphosphate (PRPP) to UMP and diphosphate. The protein is Uracil phosphoribosyltransferase of Pseudomonas aeruginosa (strain LESB58).